Consider the following 777-residue polypeptide: Translation initiation factor IF-2 (777 aa).

Disordered stretches follow at residues 30–54 (SPSM…QDEN) and 98–117 (EDSN…SFKE). The span at 98-109 (EDSNEKTNDRDS) shows a compositional bias: basic and acidic residues. A tr-type G domain is found at 279-449 (PKPPIVTFMG…LLIAELMKLE (171 aa)). Residues 288-295 (GHVDHGKT) form a G1 region. 288-295 (GHVDHGKT) is a GTP binding site. Positions 313-317 (GITQH) are G2. Positions 334-337 (DTPG) are G3. Residues 334 to 338 (DTPGH) and 388 to 391 (NKID) each bind GTP. The tract at residues 388–391 (NKID) is G4. Residues 425 to 427 (SAK) form a G5 region.

Belongs to the TRAFAC class translation factor GTPase superfamily. Classic translation factor GTPase family. IF-2 subfamily.

It localises to the cytoplasm. In terms of biological role, one of the essential components for the initiation of protein synthesis. Protects formylmethionyl-tRNA from spontaneous hydrolysis and promotes its binding to the 30S ribosomal subunits. Also involved in the hydrolysis of GTP during the formation of the 70S ribosomal complex. This chain is Translation initiation factor IF-2, found in Wolbachia sp. subsp. Brugia malayi (strain TRS).